Reading from the N-terminus, the 440-residue chain is tRNA (guanine(37)-N(1))-methyltransferase (440 aa).

Residues His-217, 255-256 (DL), 283-284 (DG), and Asn-315 contribute to the S-adenosyl-L-methionine site.

This sequence belongs to the class I-like SAM-binding methyltransferase superfamily. TRM5/TYW2 family. As to quaternary structure, monomer.

It is found in the mitochondrion matrix. Its subcellular location is the nucleus. The protein localises to the cytoplasm. The enzyme catalyses guanosine(37) in tRNA + S-adenosyl-L-methionine = N(1)-methylguanosine(37) in tRNA + S-adenosyl-L-homocysteine + H(+). In terms of biological role, specifically methylates the N1 position of guanosine-37 in various cytoplasmic and mitochondrial tRNAs. Methylation is not dependent on the nature of the nucleoside 5' of the target nucleoside. This is the first step in the biosynthesis of wybutosine (yW), a modified base adjacent to the anticodon of tRNAs and required for accurate decoding. This chain is tRNA (guanine(37)-N(1))-methyltransferase, found in Drosophila pseudoobscura pseudoobscura (Fruit fly).